Here is a 465-residue protein sequence, read N- to C-terminus: Dihydrolipoyl dehydrogenase (465 aa).

FAD is bound by residues 34–42, Lys51, and Gly114; that span reads EEREAGGTC. Cys42 and Cys47 form a disulfide bridge. NAD(+) is bound by residues 180-184, Glu203, Val237, and 264-267; these read GGGVI and SIGR. 2 residues coordinate FAD: Asp307 and Ala315. Catalysis depends on His439, which acts as the Proton acceptor.

Belongs to the class-I pyridine nucleotide-disulfide oxidoreductase family. FAD is required as a cofactor.

The protein resides in the cytoplasm. It carries out the reaction N(6)-[(R)-dihydrolipoyl]-L-lysyl-[protein] + NAD(+) = N(6)-[(R)-lipoyl]-L-lysyl-[protein] + NADH + H(+). In terms of biological role, the branched-chain alpha-keto dehydrogenase complex catalyzes the overall conversion of alpha-keto acids to acyl-CoA and CO(2). It contains multiple copies of 3 enzymatic components: branched-chain alpha-keto acid decarboxylase (E1), lipoamide acyltransferase (E2) and lipoamide dehydrogenase (E3). In Chlamydia muridarum (strain MoPn / Nigg), this protein is Dihydrolipoyl dehydrogenase (lpdA).